The sequence spans 64 residues: Disintegrin VLO5A (64 aa).

Residues 1–64 (NSGNPCCDPV…SDCPRNPYKD (64 aa)) form the Disintegrin domain. 4 disulfide bridges follow: cysteine 6–cysteine 29, cysteine 20–cysteine 26, cysteine 25–cysteine 50, and cysteine 38–cysteine 57. The short motif at 42-44 (VGD) is the Cell attachment site; atypical (VGD) element.

It belongs to the venom metalloproteinase (M12B) family. P-II subfamily. P-IIe sub-subfamily. As to quaternary structure, heterodimer with VLO5B; disulfide-linked. As to expression, expressed by the venom gland.

Its subcellular location is the secreted. Poor inhibitor of platelet aggregation. The disintegrin inhibits the adhesion of the alpha-4/beta-1 (ITGA4/ITGB1) integrin to VCAM-1. Inhibition on alpha-IIb/beta-3 (ITGA2B/ITGB3) is low. The polypeptide is Disintegrin VLO5A (Macrovipera lebetina obtusa (Levant blunt-nosed viper)).